Consider the following 509-residue polypeptide: Histidine--tRNA ligase (509 aa).

It belongs to the class-II aminoacyl-tRNA synthetase family. Homodimer.

The protein localises to the cytoplasm. The enzyme catalyses tRNA(His) + L-histidine + ATP = L-histidyl-tRNA(His) + AMP + diphosphate + H(+). This Rhodopseudomonas palustris (strain TIE-1) protein is Histidine--tRNA ligase.